We begin with the raw amino-acid sequence, 333 residues long: Glycerol-3-phosphate dehydrogenase [NAD(P)+] (333 aa).

NADPH contacts are provided by Trp13, Lys33, and Lys108. Sn-glycerol 3-phosphate contacts are provided by Lys108 and Gly138. Residue Ser142 coordinates NADPH. The sn-glycerol 3-phosphate site is built by Lys193, Asp246, Ser256, Arg257, and Asn258. Catalysis depends on Lys193, which acts as the Proton acceptor. Arg257 provides a ligand contact to NADPH. Residues Val281 and Glu283 each coordinate NADPH.

Belongs to the NAD-dependent glycerol-3-phosphate dehydrogenase family.

It is found in the cytoplasm. It catalyses the reaction sn-glycerol 3-phosphate + NAD(+) = dihydroxyacetone phosphate + NADH + H(+). It carries out the reaction sn-glycerol 3-phosphate + NADP(+) = dihydroxyacetone phosphate + NADPH + H(+). It participates in membrane lipid metabolism; glycerophospholipid metabolism. Functionally, catalyzes the reduction of the glycolytic intermediate dihydroxyacetone phosphate (DHAP) to sn-glycerol 3-phosphate (G3P), the key precursor for phospholipid synthesis. This Bifidobacterium longum (strain DJO10A) protein is Glycerol-3-phosphate dehydrogenase [NAD(P)+].